The primary structure comprises 676 residues: A-type ATP synthase subunit I (676 aa).

A run of 8 helical transmembrane segments spans residues 341–361 (VFIAIFFPIFFGMMLGDIGYG), 390–410 (AGVMSIIFGFIYGECFGPFIV), 449–469 (ILLFATIVIGIAKILFGFALG), 490–510 (IIGVLGLAMIIFGFAYNVGVF), 538–558 (LNVYYLAALPLLVVWFILFVM), 564–584 (MGAMGVILAVELLTWFGQIMS), 590–610 (AIGLSSVYIAFVINFIGMKLI), and 617–637 (IPIVGAIVLLIGHVGNLILGI).

Belongs to the V-ATPase 116 kDa subunit family. Has multiple subunits with at least A(3), B(3), C, D, E, F, H, I and proteolipid K(x).

It is found in the cell membrane. Its function is as follows. Component of the A-type ATP synthase that produces ATP from ADP in the presence of a proton gradient across the membrane. The protein is A-type ATP synthase subunit I of Archaeoglobus fulgidus (strain ATCC 49558 / DSM 4304 / JCM 9628 / NBRC 100126 / VC-16).